Reading from the N-terminus, the 230-residue chain is uncharacterized protein (230 aa).

An HTH gntR-type domain is found at 12 to 80 (KNLSYVLAEK…PRIGTRVMPQ (69 aa)). Positions 40-59 (EIELGEQFGVSRTAVREAVK) form a DNA-binding region, H-T-H motif.

This is an uncharacterized protein from Escherichia coli (strain K12).